We begin with the raw amino-acid sequence, 20 residues long: Pregnancy-associated glycoprotein 67A (20 aa).

2 N-linked (GlcNAc...) asparagine glycosylation sites follow: Asn-4 and Asn-20.

Belongs to the peptidase A1 family. In terms of tissue distribution, chorionic epithelium (trophectoderm) and placental cotyledons.

It is found in the secreted. Its subcellular location is the extracellular space. The polypeptide is Pregnancy-associated glycoprotein 67A (Bison bonasus (European bison)).